The following is a 360-amino-acid chain: Phospho-N-acetylmuramoyl-pentapeptide-transferase (360 aa).

The next 10 helical transmembrane spans lie at G27–L47, T71–A91, L93–F113, F128–I148, F168–G188, G199–S219, L239–P259, A262–V282, I288–V308, and Q337–L357.

This sequence belongs to the glycosyltransferase 4 family. MraY subfamily. Mg(2+) is required as a cofactor.

It is found in the cell inner membrane. It carries out the reaction UDP-N-acetyl-alpha-D-muramoyl-L-alanyl-gamma-D-glutamyl-meso-2,6-diaminopimeloyl-D-alanyl-D-alanine + di-trans,octa-cis-undecaprenyl phosphate = di-trans,octa-cis-undecaprenyl diphospho-N-acetyl-alpha-D-muramoyl-L-alanyl-D-glutamyl-meso-2,6-diaminopimeloyl-D-alanyl-D-alanine + UMP. The protein operates within cell wall biogenesis; peptidoglycan biosynthesis. In terms of biological role, catalyzes the initial step of the lipid cycle reactions in the biosynthesis of the cell wall peptidoglycan: transfers peptidoglycan precursor phospho-MurNAc-pentapeptide from UDP-MurNAc-pentapeptide onto the lipid carrier undecaprenyl phosphate, yielding undecaprenyl-pyrophosphoryl-MurNAc-pentapeptide, known as lipid I. The chain is Phospho-N-acetylmuramoyl-pentapeptide-transferase from Brucella anthropi (strain ATCC 49188 / DSM 6882 / CCUG 24695 / JCM 21032 / LMG 3331 / NBRC 15819 / NCTC 12168 / Alc 37) (Ochrobactrum anthropi).